The following is a 416-amino-acid chain: Tryptophan synthase beta chain (416 aa).

N6-(pyridoxal phosphate)lysine is present on Lys98.

It belongs to the TrpB family. As to quaternary structure, tetramer of two alpha and two beta chains. Requires pyridoxal 5'-phosphate as cofactor.

It carries out the reaction (1S,2R)-1-C-(indol-3-yl)glycerol 3-phosphate + L-serine = D-glyceraldehyde 3-phosphate + L-tryptophan + H2O. It functions in the pathway amino-acid biosynthesis; L-tryptophan biosynthesis; L-tryptophan from chorismate: step 5/5. Functionally, the beta subunit is responsible for the synthesis of L-tryptophan from indole and L-serine. The chain is Tryptophan synthase beta chain from Ruegeria pomeroyi (strain ATCC 700808 / DSM 15171 / DSS-3) (Silicibacter pomeroyi).